Consider the following 154-residue polypeptide: Protein X (154 aa).

The interval 68 to 117 is mitochondrial targeting sequence; it reads PCALRFTSARCMETTVNAPRNLPKVLHKRTLGLSAMSTTKIETYFKDCVF.

The protein belongs to the orthohepadnavirus protein X family. In terms of assembly, may form homodimer. May interact with host CEBPA, CFLAR, CREB1, DDB1, E4F1, HBXIP, HSPD1/HSP60, NFKBIA, POLR2E and SMAD4. Interacts with host SMC5-SMC6 complex and induces its degradation. Interacts with host TRPC4AP; leading to prevent ubiquitination of TRPC4AP. Interacts with host PLSCR1; this interaction promotes ubiquitination and degradation of HBx and impairs HBx-mediated cell proliferation. In terms of processing, a fraction may be phosphorylated in insect cells and HepG2 cells, a human hepatoblastoma cell line. Phosphorylated in vitro by host protein kinase C or mitogen-activated protein kinase. N-acetylated in insect cells.

Its subcellular location is the host cytoplasm. The protein localises to the host nucleus. The protein resides in the host mitochondrion. Multifunctional protein that plays a role in silencing host antiviral defenses and promoting viral transcription. Does not seem to be essential for HBV infection. May be directly involved in development of cirrhosis and liver cancer (hepatocellular carcinoma). Most of cytosolic activities involve modulation of cytosolic calcium. The effect on apoptosis is controversial depending on the cell types in which the studies have been conducted. May induce apoptosis by localizing in mitochondria and causing loss of mitochondrial membrane potential. May also modulate apoptosis by binding host CFLAR, a key regulator of the death-inducing signaling complex (DISC). Promotes viral transcription by using the host E3 ubiquitin ligase DDB1 to target the SMC5-SMC6 complex to proteasomal degradation. This host complex would otherwise bind to viral episomal DNA, and prevents its transcription. Moderately stimulates transcription of many different viral and cellular transcription elements. Promoters and enhancers stimulated by HBx contain DNA binding sites for NF-kappa-B, AP-1, AP-2, c-EBP, ATF/CREB, or the calcium-activated factor NF-AT. This Chimpanzee hepatitis B virus (isolate United Kingdom/LSH/1988) (HBVcpz) protein is Protein X.